We begin with the raw amino-acid sequence, 195 residues long: uncharacterized protein (195 aa).

An N-terminal signal peptide occupies residues 1–16; that stretch reads MIRTIIVFMLLTISFG.

This is an uncharacterized protein from Acanthamoeba polyphaga mimivirus (APMV).